Reading from the N-terminus, the 372-residue chain is Glutamate 5-kinase (372 aa).

Lys-9 provides a ligand contact to ATP. 3 residues coordinate substrate: Ser-49, Asp-136, and Asn-148. Residues 168–169 (TD) and 210–216 (TGGMKSK) each bind ATP. Positions 276-353 (AGSIEIDSGA…EEALSLTKRS (78 aa)) constitute a PUA domain.

This sequence belongs to the glutamate 5-kinase family.

It is found in the cytoplasm. It carries out the reaction L-glutamate + ATP = L-glutamyl 5-phosphate + ADP. It participates in amino-acid biosynthesis; L-proline biosynthesis; L-glutamate 5-semialdehyde from L-glutamate: step 1/2. In terms of biological role, catalyzes the transfer of a phosphate group to glutamate to form L-glutamate 5-phosphate. This Shouchella clausii (strain KSM-K16) (Alkalihalobacillus clausii) protein is Glutamate 5-kinase.